A 1090-amino-acid chain; its full sequence is Leucine--tRNA ligase, cytoplasmic (1090 aa).

An N-acetylserine modification is found at Ser2. The 'HIGH' region signature appears at 66-76 (PYMNGVMHAGH). Thr142 carries the phosphothreonine modification. Residues 729–733 (KMSKS) carry the 'KMSKS' region motif. ATP is bound at residue Lys732.

This sequence belongs to the class-I aminoacyl-tRNA synthetase family.

Its subcellular location is the cytoplasm. The catalysed reaction is tRNA(Leu) + L-leucine + ATP = L-leucyl-tRNA(Leu) + AMP + diphosphate. This chain is Leucine--tRNA ligase, cytoplasmic (CDC60), found in Saccharomyces cerevisiae (strain ATCC 204508 / S288c) (Baker's yeast).